The chain runs to 165 residues: uncharacterized protein (165 aa).

This is an uncharacterized protein from Aquifex aeolicus (strain VF5).